Reading from the N-terminus, the 148-residue chain is WAP four-disulfide core domain protein 12 (148 aa).

The first 23 residues, 1-23, serve as a signal peptide directing secretion; it reads MRSYSFWFLTAFLVFATLALGEA. A WAP domain is found at 27 to 74; sequence GKEKWGNCPAEKGSCIKSGPSQCHADNDCPGDKKCCFLSCSFKCVSPD. Intrachain disulfides connect cysteine 34–cysteine 62, cysteine 41–cysteine 66, cysteine 49–cysteine 61, and cysteine 55–cysteine 70. Residues 74–148 are disordered; that stretch reads DRIRKEGGNE…QEASPQKEWS (75 aa).

It is found in the secreted. In terms of biological role, antibacterial protein. Putative acid-stable proteinase inhibitor. This is WAP four-disulfide core domain protein 12 (WFDC12) from Lemur catta (Ring-tailed lemur).